A 309-amino-acid polypeptide reads, in one-letter code: ADP-L-glycero-D-manno-heptose-6-epimerase (309 aa).

NADP(+) is bound by residues 10–11 (FI), 31–32 (DN), K38, K53, 75–79 (EGACS), and N92. Y140 acts as the Proton acceptor in catalysis. K144 lines the NADP(+) pocket. Position 169 (N169) interacts with substrate. The NADP(+) site is built by V170 and K178. Residue K178 is the Proton acceptor of the active site. Substrate contacts are provided by residues S180, H187, 201–204 (FEGS), R209, and Y272.

It belongs to the NAD(P)-dependent epimerase/dehydratase family. HldD subfamily. As to quaternary structure, homopentamer. Requires NADP(+) as cofactor.

The catalysed reaction is ADP-D-glycero-beta-D-manno-heptose = ADP-L-glycero-beta-D-manno-heptose. It functions in the pathway nucleotide-sugar biosynthesis; ADP-L-glycero-beta-D-manno-heptose biosynthesis; ADP-L-glycero-beta-D-manno-heptose from D-glycero-beta-D-manno-heptose 7-phosphate: step 4/4. Catalyzes the interconversion between ADP-D-glycero-beta-D-manno-heptose and ADP-L-glycero-beta-D-manno-heptose via an epimerization at carbon 6 of the heptose. In Enterobacter sp. (strain 638), this protein is ADP-L-glycero-D-manno-heptose-6-epimerase.